We begin with the raw amino-acid sequence, 224 residues long: Putative ankyrin repeat protein R845 (224 aa).

ANK repeat units lie at residues 1–14, 15–44, 46–74, 75–104, 105–134, 136–164, 165–194, and 196–224; these read MVEYLVSLGADVRS, NYDHAIKSAFENGHLQVIKYLISLGSDVSM, YDYILLRASRNGYIDVVKYLIEQGVDPRT, NNDKAVRKASKNGRLEIVEYLVTLGADIRI, DNDSAVRWASKNGHIKTVEFLVAKGADIRA, NDYSLRHSSKHGHIKMVEYLVAQGADVRA, DNDYAIKWASGKGHLEVVKYLVEKGADFRA, and NDCAVKWASQTGRVEIVEYLVSKGAVCPY.

The sequence is that of Putative ankyrin repeat protein R845 from Acanthamoeba polyphaga mimivirus (APMV).